The primary structure comprises 607 residues: Sulfite reductase [NADPH] flavoprotein alpha-component (607 aa).

The region spanning 66–204 (VTILYGSQTG…AAGQWHADVL (139 aa)) is the Flavodoxin-like domain. Residues 72–77 (SQTGNG), 119–122 (STHG), and 155–164 (LGDSSYEFFC) contribute to the FMN site. In terms of domain architecture, FAD-binding FR-type spans 239 to 456 (QNPYRAEVLV…VEPNKHFRLP (218 aa)). Residues Thr327, Leu361, 395-398 (RLYS), 413-415 (TVA), and 428-431 (GGAS) contribute to the FAD site. Residues 527–528 (SR), 533–537 (KIYVQ), and Asp569 each bind NADP(+). Residue Tyr607 participates in FAD binding.

This sequence belongs to the NADPH-dependent sulphite reductase flavoprotein subunit CysJ family. In the N-terminal section; belongs to the flavodoxin family. It in the C-terminal section; belongs to the flavoprotein pyridine nucleotide cytochrome reductase family. In terms of assembly, alpha(8)-beta(8). The alpha component is a flavoprotein, the beta component is a hemoprotein. The cofactor is FAD. It depends on FMN as a cofactor.

The catalysed reaction is hydrogen sulfide + 3 NADP(+) + 3 H2O = sulfite + 3 NADPH + 4 H(+). It participates in sulfur metabolism; hydrogen sulfide biosynthesis; hydrogen sulfide from sulfite (NADPH route): step 1/1. In terms of biological role, component of the sulfite reductase complex that catalyzes the 6-electron reduction of sulfite to sulfide. This is one of several activities required for the biosynthesis of L-cysteine from sulfate. The flavoprotein component catalyzes the electron flow from NADPH -&gt; FAD -&gt; FMN to the hemoprotein component. The protein is Sulfite reductase [NADPH] flavoprotein alpha-component of Shewanella oneidensis (strain ATCC 700550 / JCM 31522 / CIP 106686 / LMG 19005 / NCIMB 14063 / MR-1).